The following is a 535-amino-acid chain: Expansin-like protein 9 (535 aa).

An N-terminal signal peptide occupies residues 1 to 25; sequence MKINKNNYFKIIIFIIYVIINLINA. N-linked (GlcNAc...) asparagine glycosylation is present at Asn24. Topologically, residues 26–514 are extracellular; the sequence is SDNVKLSNCG…DNSSNILLFS (489 aa). The Expansin-like EG45 domain occupies 31-144; sequence LSNCGQARAE…QEVSCGFLGN (114 aa). Cystine bridges form between Cys34–Cys75 and Cys78–Cys139. Asn122, Asn257, and Asn292 each carry an N-linked (GlcNAc...) asparagine glycan. A disordered region spans residues 459-487; it reads VDGSSNDDDGTGGTGGGASNKVGKRVDGE. Residue Asn506 is glycosylated (N-linked (GlcNAc...) asparagine). Residues 515–535 traverse the membrane as a helical segment; it reads FNITLTFLLLSLIINILLLLF.

This sequence belongs to the expansin family. Expansin A subfamily.

The protein localises to the membrane. May serve to lubricate the movement of the cellulose microfibrils during cell growth and wall extension and/or may serve to maintain the fluid state of the slug cell wall. In Dictyostelium discoideum (Social amoeba), this protein is Expansin-like protein 9 (expl9).